The following is a 519-amino-acid chain: Cyclic AMP-responsive element-binding protein 3-like protein 1 (519 aa).

The tract at residues 1–60 is required for transcription activation; that stretch reads MDAVLEPFPADRLFPGSSFLDLGDLNESDFLNNAHFPEHLDHFVENMEDFSNDLFSSFFD. Topologically, residues 1–376 are cytoplasmic; that stretch reads MDAVLEPFPA…MAATQTGTCL (376 aa). Lysine 184 is covalently cross-linked (Glycyl lysine isopeptide (Lys-Gly) (interchain with G-Cter in SUMO2)). The tract at residues 200 to 259 is disordered; sequence DLVQMPPTPPSSHGSDSDGSQSPRSLPPSSPVRPMARSSTAISTSPLLTAPHKLQGTSGP. The span at 210–223 shows a compositional bias: low complexity; that stretch reads SSHGSDSDGSQSPR. Over residues 236 to 246 the composition is skewed to polar residues; the sequence is RSSTAISTSPL. The bZIP domain occupies 290-353; that stretch reads ALKRVRRKIK…RTLLQQLQKL (64 aa). Residues 292–321 are basic motif; the sequence is KRVRRKIKNKISAQESRRKKKEYVECLEKK. Residues 332-353 are leucine-zipper; sequence LWKKVETLETANRTLLQQLQKL. A helical; Signal-anchor for type II membrane protein transmembrane segment spans residues 377-397; sequence MVAALCFVLVLGSLVPCLPAF. Positions 392–395 match the S2P recognition motif; it reads PCLP. The Lumenal segment spans residues 398-519; the sequence is SSGSMTVKED…LGPNTTIKLS (122 aa). Positions 423-426 match the S1P recognition motif; sequence RSLL. The disordered stretch occupies residues 449–519; sequence EGWELKPGGP…LGPNTTIKLS (71 aa). Basic and acidic residues predominate over residues 462–486; the sequence is RPQDHLRHDRADSIHETTKYLRETW. Residues asparagine 493, asparagine 498, and asparagine 513 are each glycosylated (N-linked (GlcNAc...) asparagine).

This sequence belongs to the bZIP family. ATF subfamily. Interacts with SMAD4, the interaction takes place upon TGFB1 induction and SMAD4 acts as a CREB3L1 coactivator to induce the expression of genes involved in assembly of collagen extracellular matrix. Post-translationally, N-glycosylated. Ubiquitinated by HRD1/SYVN1; undergoes 'Lys-48'-linked ubiquitination, followed by rapid proteasomal degradation under normal conditions. Upon ER stress, SYVN1 E3 ubiquitin-protein ligase dissociates from its substrate, ubiquitination does not occur and CREB3L1 is stabilized. In terms of processing, upon ER stress or DNA damage, translocated to the Golgi apparatus, where it is processed by regulated intramembrane proteolysis (RIP) to release the cytosol-facing N-terminal transcription factor domain. The cleavage is performed sequentially by site-1 and site-2 proteases (S1P/MBTPS1 and S2P/MBTPS2). RIP is induced by TGFB1 and ceramide. As to expression, expressed in cortical and trabecular bones. Highly expressed in osteoblasts, but not detected in osteoclasts, nor in macrophages. Expressed at relatively low levels in lung and kidney. Weakly expressed in brain and spleen. Expressed in astrocytes.

It localises to the endoplasmic reticulum membrane. Its subcellular location is the nucleus. Its function is as follows. Precursor of the transcription factor form (Processed cyclic AMP-responsive element-binding protein 3-like protein 1), which is embedded in the endoplasmic reticulum membrane with N-terminal DNA-binding and transcription activation domains oriented toward the cytosolic face of the membrane. In response to ER stress or DNA damage, transported to the Golgi, where it is cleaved in a site-specific manner by resident proteases S1P/MBTPS1 and S2P/MBTPS2. The released N-terminal cytosolic domain is translocated to the nucleus where it activates transcription of specific target genes involved in the cell-cycle progression inhibition. In terms of biological role, transcription factor involved in cell type specific DNA damage and unfolded protein response (UPR). Binds the DNA consensus sequence 5'-GTGXGCXGC-3'. Plays a critical role in bone formation through the transcription of COL1A1, and possibly COL1A2, and the secretion of bone matrix proteins. Directly binds to the UPR element (UPRE)-like sequence in an osteoblast-specific COL1A1 promoter region and induces its transcription. Does not regulate COL1A1 in other tissues, such as skin. Required to protect astrocytes from ER stress-induced cell death. In astrocytes, binds to the cAMP response element (CRE) of the BiP/HSPA5 promoter and participate in its transcriptional activation. In astrocytes and osteoblasts, upon DNA damage, inhibits cell-cycle progression after G2/M phase by binding to promoters and activating transcription of genes encoding cell-cycle inhibitors, such as p21/CDKN1A. Required for TGFB1 to activate genes involved in the assembly of collagen extracellular matrix. The protein is Cyclic AMP-responsive element-binding protein 3-like protein 1 (Creb3l1) of Mus musculus (Mouse).